A 569-amino-acid chain; its full sequence is Isocitrate dehydrogenase kinase/phosphatase (569 aa).

ATP-binding positions include 316-322 (APGVRGM) and Lys337. Asp372 is a catalytic residue.

It belongs to the AceK family.

The protein resides in the cytoplasm. It carries out the reaction L-seryl-[isocitrate dehydrogenase] + ATP = O-phospho-L-seryl-[isocitrate dehydrogenase] + ADP + H(+). Functionally, bifunctional enzyme which can phosphorylate or dephosphorylate isocitrate dehydrogenase (IDH) on a specific serine residue. This is a regulatory mechanism which enables bacteria to bypass the Krebs cycle via the glyoxylate shunt in response to the source of carbon. When bacteria are grown on glucose, IDH is fully active and unphosphorylated, but when grown on acetate or ethanol, the activity of IDH declines drastically concomitant with its phosphorylation. The sequence is that of Isocitrate dehydrogenase kinase/phosphatase from Pseudomonas putida (strain W619).